The chain runs to 310 residues: MESTHETWDLATSVGATATMVAAGRARATTTGLIDDRFAEPLVRAVGIDFMTRWATGDLAAADVDIPGATWGMQQMTDLLAARTRYFDAFFGDAAAAGVRQAVILASGLDARGYRLDWPAGTVLFEIDMPDVLEFKGRALTDLRAEPTAEVRMVAVDLRDDWPAALRAKGFDPTRPTAWSAEGLLPFLPPEAQDRLLDAITSLSASGSRLAAEVALLGSDSEDGALGADGARDLEPLLARWREHGFDLDLGDLGNSGPRNDVDDYLEARGWTSTRTPLAALLDAAGLEVPRPADGRKSLSDNYYSTAIKG.

Residues aspartate 128 and 157–158 (DL) each bind S-adenosyl-L-methionine.

The protein belongs to the UPF0677 family.

In terms of biological role, exhibits S-adenosyl-L-methionine-dependent methyltransferase activity. In Mycolicibacterium smegmatis (strain ATCC 700084 / mc(2)155) (Mycobacterium smegmatis), this protein is Putative S-adenosyl-L-methionine-dependent methyltransferase MSMEG_1888/MSMEI_1848.